Reading from the N-terminus, the 335-residue chain is Nucleoid-associated protein YejK (335 aa).

The protein belongs to the YejK family.

It is found in the cytoplasm. The protein resides in the nucleoid. This Salmonella enteritidis PT4 (strain P125109) protein is Nucleoid-associated protein YejK.